A 28-amino-acid chain; its full sequence is M-poneritoxin-Dq4a (28 aa).

Alanine amide is present on Ala28.

As to expression, expressed by the venom gland.

The protein localises to the secreted. Functionally, the synthetic peptide has weak antimicrobial activity against Gram-negative bacterium E.coli ATCC 10536. It does not show antimicrobial activity against the Gram-positive bacteria B.amyloliquefacies S499, L.monocytogenes 2231 and S.aureus ATCC 29213, against the Gram-negative bacteria P.putida BTP1 and P.aeruginosa PaO1, or against the fungi S.cerevisiae, R.mucilaginosa, C.cucumerinum, F.oxysporum and B.cinerea. This is M-poneritoxin-Dq4a from Dinoponera quadriceps (South American ant).